Consider the following 301-residue polypeptide: Heterogeneous nuclear ribonucleoprotein D-like (301 aa).

RRM domains are found at residues 29-111 (GKMF…KGKE) and 114-193 (KKVF…QPKE). Lys42 carries the N6-methyllysine modification. Lys90 is covalently cross-linked (Glycyl lysine isopeptide (Lys-Gly) (interchain with G-Cter in SUMO2)). The residue at position 97 (Lys97) is an N6-acetyllysine. At Ser122 the chain carries Phosphoserine. Disordered stretches follow at residues 194 to 229 (VYRQ…NWNQ) and 279 to 301 (GQQS…YQPY). Gly residues predominate over residues 204–223 (GGRGAAAGGRGGARGRGRGQ). The tract at residues 223–301 (QGQNWNQGFN…GNHQNNYQPY (79 aa)) is necessary for interaction with TNPO1. Residue Arg289 is modified to Dimethylated arginine; alternate. Arg289 carries the omega-N-methylarginine; alternate modification.

As to quaternary structure, interacts with TNPO1. Interacts with ZNF148. Post-translationally, dimethylation of Arg-289 is probably of the asymmetric type. Expressed in skeletal muscle, myoblast, myotube, heart, brain, liver, kidney, heart, lung, stomach, small intestine, large intestine, spleen, and testis (at protein level). Expressed in brain, skeletal muscle, heart, lung, liver, stomach, small intestine, large intestine, kidney, spleen and testis.

Its subcellular location is the nucleus. The protein resides in the cytoplasm. Its function is as follows. Acts as a transcriptional regulator. Promotes transcription repression. Promotes transcription activation in differentiated myotubes. Binds to double- and single-stranded DNA sequences. Binds to the transcription suppressor CATR sequence of the COX5B promoter. Binds with high affinity to RNA molecules that contain AU-rich elements (AREs) found within the 3'-UTR of many proto-oncogenes and cytokine mRNAs. Binds both to nuclear and cytoplasmic poly(A) mRNAs. Binds to poly(G) and poly(A), but not to poly(U) or poly(C) RNA homopolymers. Binds to the 5'-ACUAGC-3' RNA consensus sequence. The chain is Heterogeneous nuclear ribonucleoprotein D-like (Hnrnpdl) from Mus musculus (Mouse).